The primary structure comprises 129 residues: MGKAKAPRQLKDNEAKAVARTLRVSPQKLNLVASMIRGKKVNAALADLTFSRKRIAGTVKKTLESAIANAENNHDLDVDALIVAEAYVGKSIVMKRFHVRDRGRASRIEKPFSHLTIVVREVAEKGKAA.

This sequence belongs to the universal ribosomal protein uL22 family. In terms of assembly, part of the 50S ribosomal subunit.

Its function is as follows. This protein binds specifically to 23S rRNA; its binding is stimulated by other ribosomal proteins, e.g. L4, L17, and L20. It is important during the early stages of 50S assembly. It makes multiple contacts with different domains of the 23S rRNA in the assembled 50S subunit and ribosome. The globular domain of the protein is located near the polypeptide exit tunnel on the outside of the subunit, while an extended beta-hairpin is found that lines the wall of the exit tunnel in the center of the 70S ribosome. This is Large ribosomal subunit protein uL22 from Brucella abortus (strain 2308).